A 195-amino-acid chain; its full sequence is dITP/XTP pyrophosphatase (195 aa).

Residue 8-13 (TNNQGK) participates in substrate binding. Positions 39 and 68 each coordinate Mg(2+). Residue Asp68 is the Proton acceptor of the active site. Substrate is bound by residues Ser69, 149–152 (FGYD), Lys172, and 177–178 (HR).

This sequence belongs to the HAM1 NTPase family. As to quaternary structure, homodimer. Mg(2+) is required as a cofactor.

The enzyme catalyses XTP + H2O = XMP + diphosphate + H(+). It catalyses the reaction dITP + H2O = dIMP + diphosphate + H(+). The catalysed reaction is ITP + H2O = IMP + diphosphate + H(+). Its function is as follows. Pyrophosphatase that catalyzes the hydrolysis of nucleoside triphosphates to their monophosphate derivatives, with a high preference for the non-canonical purine nucleotides XTP (xanthosine triphosphate), dITP (deoxyinosine triphosphate) and ITP. Seems to function as a house-cleaning enzyme that removes non-canonical purine nucleotides from the nucleotide pool, thus preventing their incorporation into DNA/RNA and avoiding chromosomal lesions. The polypeptide is dITP/XTP pyrophosphatase (Staphylococcus epidermidis (strain ATCC 12228 / FDA PCI 1200)).